The sequence spans 192 residues: Adapter protein MecA (192 aa).

The protein belongs to the MecA family. In terms of assembly, homodimer.

Functionally, enables the recognition and targeting of unfolded and aggregated proteins to the ClpC protease or to other proteins involved in proteolysis. Acts negatively in the development of competence by binding ComK and recruiting it to the ClpCP protease. When overexpressed, inhibits sporulation. Also involved in Spx degradation by ClpC. The protein is Adapter protein MecA of Oceanobacillus iheyensis (strain DSM 14371 / CIP 107618 / JCM 11309 / KCTC 3954 / HTE831).